The primary structure comprises 413 residues: uncharacterized protein (413 aa).

This is an uncharacterized protein from Mycoplasma pneumoniae (strain ATCC 29342 / M129 / Subtype 1) (Mycoplasmoides pneumoniae).